Here is a 231-residue protein sequence, read N- to C-terminus: Phosphoglycolate phosphatase (231 aa).

Catalysis depends on Asp9, which acts as the Nucleophile. Residues Asp9 and Asp11 each contribute to the Mg(2+) site. Lys154 lines the substrate pocket. Mg(2+) is bound by residues Asp177 and Asp181.

It belongs to the archaeal SPP-like hydrolase family. Requires Mg(2+) as cofactor.

The enzyme catalyses 2-phosphoglycolate + H2O = glycolate + phosphate. In terms of biological role, catalyzes the dephosphorylation of 2-phosphoglycolate. The sequence is that of Phosphoglycolate phosphatase from Nitrosopumilus maritimus (strain SCM1).